The chain runs to 153 residues: Ribonuclease H (153 aa).

Positions 1-142 constitute an RNase H type-1 domain; that stretch reads MTDQIEIFTD…ADELARRGVD (142 aa). Residues D10, E48, D70, and D134 each contribute to the Mg(2+) site.

The protein belongs to the RNase H family. Monomer. Mg(2+) serves as cofactor.

The protein localises to the cytoplasm. The catalysed reaction is Endonucleolytic cleavage to 5'-phosphomonoester.. Endonuclease that specifically degrades the RNA of RNA-DNA hybrids. The protein is Ribonuclease H of Aromatoleum aromaticum (strain DSM 19018 / LMG 30748 / EbN1) (Azoarcus sp. (strain EbN1)).